The chain runs to 374 residues: Protein TAB2 homolog, chloroplastic (374 aa).

Residues 1–64 constitute a chloroplast transit peptide; sequence MATLGFNTRR…SLSITKEQEV (64 aa). Positions 58–84 are disordered; it reads ITKEQEVANEVEEDDPTSELSYLDPES. A compositionally biased stretch (acidic residues) spans 64-74; it reads VANEVEEDDPT.

It is found in the plastid. The protein resides in the chloroplast. In terms of biological role, nuclear genome-encoded A/U-rich RNA-binding protein involved in the biogenesis of photosystem I (PSI) and II (PSII). Required for the light-controlled accumulation of PSI and PSII during early plant development. Does not seem to be required for the translation of mRNAs of the PSI subunits. The protein is Protein TAB2 homolog, chloroplastic of Arabidopsis thaliana (Mouse-ear cress).